A 442-amino-acid chain; its full sequence is Elongation factor 1-alpha (442 aa).

Residues 6-229 (KPHMNLIVIG…ALDNLKPPSV (224 aa)) form the tr-type G domain. The tract at residues 15–22 (GHVDHGKS) is G1. 15–22 (GHVDHGKS) contributes to the GTP binding site. Ser-22 is a Mg(2+) binding site. The interval 71–75 (GVTID) is G2. The tract at residues 92–95 (DAPG) is G3. GTP is bound by residues 92–96 (DAPGH) and 154–157 (NKMD). The tract at residues 154–157 (NKMD) is G4. Positions 195 to 197 (SAW) are G5.

The protein belongs to the TRAFAC class translation factor GTPase superfamily. Classic translation factor GTPase family. EF-Tu/EF-1A subfamily.

It is found in the cytoplasm. The catalysed reaction is GTP + H2O = GDP + phosphate + H(+). Its function is as follows. GTP hydrolase that promotes the GTP-dependent binding of aminoacyl-tRNA to the A-site of ribosomes during protein biosynthesis. This chain is Elongation factor 1-alpha, found in Ignicoccus hospitalis (strain KIN4/I / DSM 18386 / JCM 14125).